The primary structure comprises 502 residues: Probable mRNA-splicing protein ubp10 (502 aa).

The UBP-type; degenerate zinc finger occupies 56 to 153; it reads SQNLYLDTIN…YVMRPTFTKL (98 aa). Zn(2+)-binding residues include Cys-89, Cys-92, His-108, and His-114. The USP domain maps to 178–501; it reads VGMNNIKNND…ESFIQLWERS (324 aa).

This sequence belongs to the peptidase C19 family.

The protein localises to the nucleus. In terms of biological role, may play a role in mRNA splicing. It is unsure if the protein really exhibits hydrolase activity. Could be a competitor of ubiquitin C-terminal hydrolases (UCHs). This is Probable mRNA-splicing protein ubp10 (ubp10) from Schizosaccharomyces pombe (strain 972 / ATCC 24843) (Fission yeast).